Reading from the N-terminus, the 525-residue chain is uncharacterized protein (525 aa).

The signal sequence occupies residues 1-21 (MLECLSALLVLFAGGGGSVLA). Over 22 to 448 (AVQSKTVADP…ISAASQLDKR (427 aa)) the chain is Extracellular. Positions 242-264 (KVSSENCSKDTDDKSGSKKERNT) are disordered. Residues 449-469 (IFIFTAITVSITTLMMLGFSY) form a helical membrane-spanning segment. The Cytoplasmic segment spans residues 470-525 (RSRVSFRDHSIDDSDDDNDWSDDEVEFDEEYFYSLPVSIPEKGISLDKMAQQLGVE).

Its subcellular location is the membrane. This is an uncharacterized protein from Saccharomyces cerevisiae (strain YJM789) (Baker's yeast).